Here is a 112-residue protein sequence, read N- to C-terminus: Protein FAM32A (112 aa).

A disordered region spans residues 23-58; that stretch reads TKRKKKKKDKDKAKLLEAMGTSKKNEEEKRRGLDKR. Positions 45–58 are enriched in basic and acidic residues; the sequence is KKNEEEKRRGLDKR.

Belongs to the FAM32 family.

It localises to the nucleus. Its function is as follows. May induce G2 arrest and apoptosis. May also increase cell sensitivity to apoptotic stimuli. This Bos taurus (Bovine) protein is Protein FAM32A (FAM32A).